The following is a 175-amino-acid chain: Inorganic pyrophosphatase (175 aa).

Substrate contacts are provided by K30, R44, and Y56. D66, D71, and D103 together coordinate Mg(2+). A substrate-binding site is contributed by Y142.

Belongs to the PPase family. As to quaternary structure, homohexamer. Mg(2+) is required as a cofactor.

The protein resides in the cytoplasm. It catalyses the reaction diphosphate + H2O = 2 phosphate + H(+). Functionally, catalyzes the hydrolysis of inorganic pyrophosphate (PPi) forming two phosphate ions. The protein is Inorganic pyrophosphatase of Ralstonia nicotianae (strain ATCC BAA-1114 / GMI1000) (Ralstonia solanacearum).